We begin with the raw amino-acid sequence, 392 residues long: SH3 domain-binding protein 5-like (392 aa).

Residues 1-57 (MADLKKAAGGRETPQGELRSEVVEDEGPRSPVAEEPGGSGSNSSETKLSPREEEELD) form a disordered region. Position 13 is a phosphothreonine (Thr-13). Residues 18–28 (LRSEVVEDEGP) are compositionally biased toward basic and acidic residues. Residues Ser-30 and Ser-49 each carry the phosphoserine modification. Coiled coils occupy residues 59 to 140 (RIQE…YERA) and 169 to 272 (WQEM…EQIH). The interval 275–332 (RRGLPPHPLGPRRSSPVGAEAGPEGIEDGDSGIEGAEGGGLEEGSSLGPGPGPDTDTL) is disordered. The segment covering 317–332 (EGSSLGPGPGPDTDTL) has biased composition (low complexity). Ser-342, Ser-349, Ser-357, Ser-361, and Ser-377 each carry phosphoserine. Positions 364-392 (GQELGAQSRGRRGSDIGVRGGRHQRSVSL) are disordered. Residues 383–392 (GGRHQRSVSL) are compositionally biased toward basic residues.

The protein belongs to the SH3BP5 family.

Functionally, functions as a guanine nucleotide exchange factor (GEF) for RAB11A. This Mus musculus (Mouse) protein is SH3 domain-binding protein 5-like (Sh3bp5l).